We begin with the raw amino-acid sequence, 202 residues long: ATP-dependent Clp protease proteolytic subunit (202 aa).

The active-site Nucleophile is serine 101. Histidine 126 is an active-site residue.

It belongs to the peptidase S14 family. Component of the chloroplastic Clp protease core complex.

The protein resides in the plastid. Its subcellular location is the chloroplast stroma. It carries out the reaction Hydrolysis of proteins to small peptides in the presence of ATP and magnesium. alpha-casein is the usual test substrate. In the absence of ATP, only oligopeptides shorter than five residues are hydrolyzed (such as succinyl-Leu-Tyr-|-NHMec, and Leu-Tyr-Leu-|-Tyr-Trp, in which cleavage of the -Tyr-|-Leu- and -Tyr-|-Trp bonds also occurs).. Cleaves peptides in various proteins in a process that requires ATP hydrolysis. Has a chymotrypsin-like activity. Plays a major role in the degradation of misfolded proteins. The chain is ATP-dependent Clp protease proteolytic subunit from Illicium oligandrum (Star anise).